The chain runs to 309 residues: Mitochondrial import receptor subunit TOM34 (309 aa).

S8 carries the post-translational modification Phosphoserine. TPR repeat units lie at residues 9–42, 51–84, and 86–118; these read VEQL…LQAR, SVLY…VPFS, and KPLL…DNSV. The segment at 158-187 is disordered; that stretch reads WSSLPSENHKETAKSKSKETTATKNRVPSA. S160 bears the Phosphoserine mark. Residues 164–178 are compositionally biased toward basic and acidic residues; that stretch reads ENHKETAKSKSKETT. S186 is modified (phosphoserine). TPR repeat units lie at residues 193-226, 227-260, and 262-294; these read ARVL…SSLE, SATY…DGKN, and KAFY…EPRN. A Glycyl lysine isopeptide (Lys-Gly) (interchain with G-Cter in SUMO2) cross-link involves residue K197.

Belongs to the Tom34 family. Interacts with HSP90A, VCP, ATP6V1D, KIAA0665, AMPK, and DMAP1 through its TPR repeat.

The protein resides in the cytoplasm. Its subcellular location is the mitochondrion outer membrane. Plays a role in the import of cytosolically synthesized preproteins into mitochondria. Binds the mature portion of precursor proteins. Interacts with cellular components, and possesses weak ATPase activity. May be a chaperone-like protein that helps to keep newly synthesized precursors in an unfolded import compatible state. This is Mitochondrial import receptor subunit TOM34 (Tomm34) from Rattus norvegicus (Rat).